Consider the following 405-residue polypeptide: Probable tRNA sulfurtransferase (405 aa).

In terms of domain architecture, THUMP spans 60–165 (DKIDQRLKLV…QDAIYISNQL (106 aa)). Residues 183 to 184 (ML), 208 to 209 (HF), arginine 265, glycine 287, and glutamine 296 contribute to the ATP site.

The protein belongs to the ThiI family.

The protein resides in the cytoplasm. The enzyme catalyses [ThiI sulfur-carrier protein]-S-sulfanyl-L-cysteine + a uridine in tRNA + 2 reduced [2Fe-2S]-[ferredoxin] + ATP + H(+) = [ThiI sulfur-carrier protein]-L-cysteine + a 4-thiouridine in tRNA + 2 oxidized [2Fe-2S]-[ferredoxin] + AMP + diphosphate. The catalysed reaction is [ThiS sulfur-carrier protein]-C-terminal Gly-Gly-AMP + S-sulfanyl-L-cysteinyl-[cysteine desulfurase] + AH2 = [ThiS sulfur-carrier protein]-C-terminal-Gly-aminoethanethioate + L-cysteinyl-[cysteine desulfurase] + A + AMP + 2 H(+). The protein operates within cofactor biosynthesis; thiamine diphosphate biosynthesis. Its function is as follows. Catalyzes the ATP-dependent transfer of a sulfur to tRNA to produce 4-thiouridine in position 8 of tRNAs, which functions as a near-UV photosensor. Also catalyzes the transfer of sulfur to the sulfur carrier protein ThiS, forming ThiS-thiocarboxylate. This is a step in the synthesis of thiazole, in the thiamine biosynthesis pathway. The sulfur is donated as persulfide by IscS. The protein is Probable tRNA sulfurtransferase of Lactobacillus gasseri (strain ATCC 33323 / DSM 20243 / BCRC 14619 / CIP 102991 / JCM 1131 / KCTC 3163 / NCIMB 11718 / NCTC 13722 / AM63).